We begin with the raw amino-acid sequence, 177 residues long: Large ribosomal subunit protein uL6 (177 aa).

It belongs to the universal ribosomal protein uL6 family. As to quaternary structure, part of the 50S ribosomal subunit.

In terms of biological role, this protein binds to the 23S rRNA, and is important in its secondary structure. It is located near the subunit interface in the base of the L7/L12 stalk, and near the tRNA binding site of the peptidyltransferase center. The chain is Large ribosomal subunit protein uL6 from Edwardsiella ictaluri (strain 93-146).